Consider the following 227-residue polypeptide: Ribosomal RNA small subunit methyltransferase G (227 aa).

S-adenosyl-L-methionine-binding positions include Gly-74, Leu-79, 124-125 (AE), and Arg-142.

Belongs to the methyltransferase superfamily. RNA methyltransferase RsmG family.

It localises to the cytoplasm. In terms of biological role, specifically methylates the N7 position of guanine in position 518 of 16S rRNA. This is Ribosomal RNA small subunit methyltransferase G from Mycolicibacterium gilvum (strain PYR-GCK) (Mycobacterium gilvum (strain PYR-GCK)).